Here is a 311-residue protein sequence, read N- to C-terminus: HPr kinase/phosphorylase (311 aa).

Residues histidine 139 and lysine 160 contribute to the active site. 154-161 is a binding site for ATP; sequence GQSGVGKS. Serine 161 contacts Mg(2+). The Proton acceptor; for phosphorylation activity. Proton donor; for dephosphorylation activity role is filled by aspartate 178. The segment at 202–211 is important for the catalytic mechanism of both phosphorylation and dephosphorylation; the sequence is LEIRGIGIID. Glutamate 203 lines the Mg(2+) pocket. The active site involves arginine 244. The interval 265–270 is important for the catalytic mechanism of dephosphorylation; that stretch reads PVRPGR.

The protein belongs to the HPrK/P family. As to quaternary structure, homohexamer. Mg(2+) is required as a cofactor.

The enzyme catalyses [HPr protein]-L-serine + ATP = [HPr protein]-O-phospho-L-serine + ADP + H(+). It catalyses the reaction [HPr protein]-O-phospho-L-serine + phosphate + H(+) = [HPr protein]-L-serine + diphosphate. Functionally, catalyzes the ATP- as well as the pyrophosphate-dependent phosphorylation of a specific serine residue in HPr, a phosphocarrier protein of the phosphoenolpyruvate-dependent sugar phosphotransferase system (PTS). HprK/P also catalyzes the pyrophosphate-producing, inorganic phosphate-dependent dephosphorylation (phosphorolysis) of seryl-phosphorylated HPr (P-Ser-HPr). The two antagonistic activities of HprK/P are regulated by several intracellular metabolites, which change their concentration in response to the absence or presence of rapidly metabolisable carbon sources (glucose, fructose, etc.) in the growth medium. Therefore, by controlling the phosphorylation state of HPr, HPrK/P is a sensor enzyme that plays a major role in the regulation of carbon metabolism and sugar transport: it mediates carbon catabolite repression (CCR), and regulates PTS-catalyzed carbohydrate uptake and inducer exclusion. This is HPr kinase/phosphorylase from Exiguobacterium sp. (strain ATCC BAA-1283 / AT1b).